The primary structure comprises 137 residues: uncharacterized protein (137 aa).

In terms of domain architecture, HTH marR-type spans 5–136 (NRHLIHQINQ…FSHLFRMFLQ (132 aa)). The segment at residues 51 to 74 (QKEIWSYLNVEAPTVTRTIKRLEE) is a DNA-binding region (H-T-H motif).

This is an uncharacterized protein from Bacillus subtilis (strain 168).